Here is a 491-residue protein sequence, read N- to C-terminus: Ketol-acid reductoisomerase (NADP(+)) (491 aa).

The KARI N-terminal Rossmann domain maps to 15–208 (AQLGKCRFMG…GGHRAGVLES (194 aa)). Residues 45–48 (CGAQ), arginine 68, arginine 76, serine 78, and 108–110 (DKQ) contribute to the NADP(+) site. Histidine 132 is an active-site residue. Glycine 158 is an NADP(+) binding site. KARI C-terminal knotted domains are found at residues 209-344 (SFVA…TAPQ) and 345-484 (YEGK…MTDM). Positions 217, 221, 389, and 393 each coordinate Mg(2+). A substrate-binding site is contributed by serine 414.

Belongs to the ketol-acid reductoisomerase family. Mg(2+) is required as a cofactor.

It catalyses the reaction (2R)-2,3-dihydroxy-3-methylbutanoate + NADP(+) = (2S)-2-acetolactate + NADPH + H(+). The catalysed reaction is (2R,3R)-2,3-dihydroxy-3-methylpentanoate + NADP(+) = (S)-2-ethyl-2-hydroxy-3-oxobutanoate + NADPH + H(+). Its pathway is amino-acid biosynthesis; L-isoleucine biosynthesis; L-isoleucine from 2-oxobutanoate: step 2/4. The protein operates within amino-acid biosynthesis; L-valine biosynthesis; L-valine from pyruvate: step 2/4. Functionally, involved in the biosynthesis of branched-chain amino acids (BCAA). Catalyzes an alkyl-migration followed by a ketol-acid reduction of (S)-2-acetolactate (S2AL) to yield (R)-2,3-dihydroxy-isovalerate. In the isomerase reaction, S2AL is rearranged via a Mg-dependent methyl migration to produce 3-hydroxy-3-methyl-2-ketobutyrate (HMKB). In the reductase reaction, this 2-ketoacid undergoes a metal-dependent reduction by NADPH to yield (R)-2,3-dihydroxy-isovalerate. The chain is Ketol-acid reductoisomerase (NADP(+)) from Salmonella arizonae (strain ATCC BAA-731 / CDC346-86 / RSK2980).